Here is a 251-residue protein sequence, read N- to C-terminus: Phosphate import ATP-binding protein PstB 2 (251 aa).

In terms of domain architecture, ABC transporter spans 5 to 246 (ITSKDVHLSY…PKKQITSDYL (242 aa)). An ATP-binding site is contributed by 37 to 44 (GPSGCGKS).

Belongs to the ABC transporter superfamily. Phosphate importer (TC 3.A.1.7) family. In terms of assembly, the complex is composed of two ATP-binding proteins (PstB), two transmembrane proteins (PstC and PstA) and a solute-binding protein (PstS).

The protein localises to the cell membrane. The enzyme catalyses phosphate(out) + ATP + H2O = ADP + 2 phosphate(in) + H(+). Functionally, part of the ABC transporter complex PstSACB involved in phosphate import. Responsible for energy coupling to the transport system. The chain is Phosphate import ATP-binding protein PstB 2 from Lactobacillus johnsonii (strain CNCM I-12250 / La1 / NCC 533).